A 481-amino-acid polypeptide reads, in one-letter code: Proline--tRNA ligase (481 aa).

This sequence belongs to the class-II aminoacyl-tRNA synthetase family. ProS type 3 subfamily. In terms of assembly, homodimer.

Its subcellular location is the cytoplasm. It carries out the reaction tRNA(Pro) + L-proline + ATP = L-prolyl-tRNA(Pro) + AMP + diphosphate. Its function is as follows. Catalyzes the attachment of proline to tRNA(Pro) in a two-step reaction: proline is first activated by ATP to form Pro-AMP and then transferred to the acceptor end of tRNA(Pro). In Chlorobium phaeobacteroides (strain BS1), this protein is Proline--tRNA ligase.